A 189-amino-acid polypeptide reads, in one-letter code: T-cell surface glycoprotein CD3 epsilon chain (189 aa).

A signal peptide spans 1-21 (MRWNTFWGILCLSLLAVGTCQ). The Ig-like domain occupies 23-99 (DAENIEYKVS…KNTYLYLKAR (77 aa)). The Extracellular segment spans residues 23–108 (DAENIEYKVS…RVCEYCVEVD (86 aa)). A disulfide bridge connects residues Cys42 and Cys83. The helical transmembrane segment at 109–134 (LTAVAIIIIVDICITLGLLMVIYYWS) threads the bilayer. Over 135–189 (KNRKAKAKPVTRGTGAGSRPRGQNKERPPPVPNPDYEPIRKGQRDLYSGLNQRAV) the chain is Cytoplasmic. Residues 143-189 (PVTRGTGAGSRPRGQNKERPPPVPNPDYEPIRKGQRDLYSGLNQRAV) are disordered. Positions 157–174 (QNKERPPPVPNPDYEPIR) are NUMB-binding region. The ITAM domain occupies 160–187 (ERPPPVPNPDYEPIRKGQRDLYSGLNQR). A proline-rich sequence region spans residues 161 to 168 (RPPPVPNP). Tyr170 and Tyr181 each carry phosphotyrosine.

The TCR-CD3 complex is composed of a CD3D/CD3E and a CD3G/CD3E heterodimers that preferentially associate with TCRalpha and TCRbeta, respectively, to form TCRalpha/CD3E/CD3G and TCRbeta/CD3G/CD3E trimers. In turn, the hexamer interacts with CD3Z homodimer to form the TCR-CD3 complex. Alternatively, TCRalpha and TCRbeta can be replaced by TCRgamma and TCRdelta. Interacts with CD6. Interacts (via Proline-rich sequence) with NCK1; the interaction is ligand dependent but independent of tyrosine kinase activation. Post-translationally, phosphorylated on Tyr residues after T-cell receptor triggering by LCK in association with CD4/CD8.

The protein resides in the cell membrane. In terms of biological role, part of the TCR-CD3 complex present on T-lymphocyte cell surface that plays an essential role in adaptive immune response. When antigen presenting cells (APCs) activate T-cell receptor (TCR), TCR-mediated signals are transmitted across the cell membrane by the CD3 chains CD3D, CD3E, CD3G and CD3Z. All CD3 chains contain immunoreceptor tyrosine-based activation motifs (ITAMs) in their cytoplasmic domain. Upon TCR engagement, these motifs become phosphorylated by Src family protein tyrosine kinases LCK and FYN, resulting in the activation of downstream signaling pathways. In addition of this role of signal transduction in T-cell activation, CD3E plays an essential role in correct T-cell development. Also participates in internalization and cell surface down-regulation of TCR-CD3 complexes via endocytosis sequences present in CD3E cytosolic region. In addition to its role as a TCR coreceptor, it serves as a receptor for ITPRIPL1. Ligand recognition inhibits T-cell activation by promoting interaction with NCK1, which prevents CD3E-ZAP70 interaction and blocks the ERK-NFkB signaling cascade and calcium influx. The chain is T-cell surface glycoprotein CD3 epsilon chain (Cd3e) from Mus musculus (Mouse).